Reading from the N-terminus, the 180-residue chain is Minor allergen Can f 2 (180 aa).

An N-terminal signal peptide occupies residues 1–18; the sequence is MQLLLLTVGLALICGLQA. The N-linked (GlcNAc...) asparagine glycan is linked to Asn-45. The cysteines at positions 82 and 175 are disulfide-linked.

It belongs to the calycin superfamily. Lipocalin family. As to expression, tongue epithelial tissue and parotid gland.

It is found in the secreted. The sequence is that of Minor allergen Can f 2 from Canis lupus familiaris (Dog).